Here is a 480-residue protein sequence, read N- to C-terminus: Probable cytosol aminopeptidase (480 aa).

Mn(2+)-binding residues include Lys-248 and Asp-253. Lys-260 is a catalytic residue. Mn(2+)-binding residues include Asp-271, Asp-330, and Glu-332. Residue Arg-334 is part of the active site.

This sequence belongs to the peptidase M17 family. The cofactor is Mn(2+).

It localises to the cytoplasm. The enzyme catalyses Release of an N-terminal amino acid, Xaa-|-Yaa-, in which Xaa is preferably Leu, but may be other amino acids including Pro although not Arg or Lys, and Yaa may be Pro. Amino acid amides and methyl esters are also readily hydrolyzed, but rates on arylamides are exceedingly low.. The catalysed reaction is Release of an N-terminal amino acid, preferentially leucine, but not glutamic or aspartic acids.. In terms of biological role, presumably involved in the processing and regular turnover of intracellular proteins. Catalyzes the removal of unsubstituted N-terminal amino acids from various peptides. The sequence is that of Probable cytosol aminopeptidase from Solibacter usitatus (strain Ellin6076).